Here is a 372-residue protein sequence, read N- to C-terminus: MWPFTSAPAGAKCRLVETLPENMDFRSDHLTTFECFNEIITLAKKYIYIASFCCNPLSTTRGALIFDKLKEASEKGIKIIVLLDERGKRNLGELQSHCPDINFITVNIDKKNNVGLLLGCFWVSDDERCYVGNASFTGGSIHTIKTLGVYSDYPPLATDLRRRFDTFKAFNSVKNSWLNLYSSACCLPVSTAYHIKNPIGGVFFTDSPEHLLGYSRDLDTDVVIDKLRSAKTSIDIEHLAIVPTTRVDGNSYYWPDIYNSIIEAAINRGVKIRLLVGNWDKNDVYSMATAESLDALCVQNDLSVKVFTIQNNTKLLIVDDEYVHITSANFDGTHYQNHGFVSFNSIDKQLVSEAKKIFERDWVSSHSKSLKI.

The short motif at 153–156 (YPPL) is the YPPL element. S-palmitoyl cysteine; by host attachment occurs at residues Cys-185 and Cys-186. The PLD phosphodiesterase domain occupies 307-334 (FTIQNNTKLLIVDDEYVHITSANFDGTH).

This sequence belongs to the orthopoxvirus OPG057 family. In terms of assembly, interacts with protein OPG190. Palmitoylated. Attachment of the palmitate moiety is essential for correct intracellular targeting and protein function.

The protein resides in the virion membrane. It localises to the host Golgi apparatus. Its subcellular location is the host trans-Golgi network. It is found in the host endoplasmic reticulum membrane. The catalysed reaction is a 1,2-diacyl-sn-glycero-3-phosphocholine + H2O = a 1,2-diacyl-sn-glycero-3-phosphate + choline + H(+). Major envelope protein that plays a role in the biogenesis of the viral double membrane and in egress of virus from the host cell. Produces the wrapped form of virus that is required for cell-to-cell spread. Acts as a lipase with broad specificity including phospholipase C, phospholipase A, and triacylglycerol lipase activities. The protein is Envelope phospholipase OPG057 (OPG057) of Variola virus (isolate Human/India/Ind3/1967) (VARV).